The following is a 214-amino-acid chain: Refilin-B (214 aa).

The interval 1–56 (MVGRLSLQDVPELVDAKKKGDGVLDSPDSGLPPSPSPSHWGLAAGGGGGERAAAPG) is disordered. Residues serine 6 and serine 26 each carry the phosphoserine modification.

The protein belongs to the Refilin family. In terms of assembly, interacts with FLNA and FLNB.

Its subcellular location is the cytoplasm. The protein resides in the cytoskeleton. Its function is as follows. Involved in the regulation of the perinuclear actin network and nuclear shape through interaction with filamins. Plays an essential role in the formation of cartilaginous skeletal elements. The polypeptide is Refilin-B (Homo sapiens (Human)).